The primary structure comprises 563 residues: Nigrin b (563 aa).

An N-terminal signal peptide occupies residues 1 to 25 (MRVVAAAMLYFYIVVLAICSVGIQG). Residue E188 is part of the active site. N221 is a glycosylation site (N-linked (GlcNAc...) asparagine). 3 disulfide bridges follow: C274–C302, C319–C338, and C360–C377. Ricin B-type lectin domains lie at 305 to 431 (RTSF…WTVT) and 434 to 559 (VKPI…WVTQ). Residues 316-356 (DGLCVDVRNGYDTDGTPLQLWPCGTQRNQRWTFDSDDTIRS) form a 1-alpha repeat. The stretch at 357 to 397 (MGKCMTANGLNNGSNIVIFNCSTAAENAIKWEVPIDGSIIN) is one 1-beta repeat. Residues N368 and N376 are each glycosylated (N-linked (GlcNAc...) asparagine). The 1-gamma repeat unit spans residues 400–432 (SGLVMTAPRAASRTILLLEDNIYAASQGWTVTN). The stretch at 445–482 (KEMCLQSNGENNGVWMEDCEATSLQQQWALYGDRTIRV) is one 2-alpha repeat. A disulfide bridge links C448 with C463. The N-linked (GlcNAc...) asparagine glycan is linked to N483. Residues 486 to 524 (RGLCVTTNGYNSKDLIIILKCQGLPSQRWFFNSDGAIVN) form a 2-beta repeat. C489 and C506 are joined by a disulfide. The stretch at 527–554 (SRHVMDVRASNVSLREIIIFPATGNPNQ) is one 2-gamma repeat. N537 carries N-linked (GlcNAc...) asparagine glycosylation.

It in the N-terminal section; belongs to the ribosome-inactivating protein family. Type 2 RIP subfamily. Disulfide-linked dimer of A and B chains.

It carries out the reaction Endohydrolysis of the N-glycosidic bond at one specific adenosine on the 28S rRNA.. Functionally, non-toxic type 2 RIP which strongly inhibits mammalian protein synthesis but does not affect plant nor bacterial protein synthesis. The A chain is responsible for inhibiting protein synthesis through the catalytic inactivation of 60S ribosomal subunits by removing adenine from position 4,324 of 28S rRNA. In terms of biological role, the B chain is a galactose-specific lectin that facilitates the binding of nigrin b to the cell membrane that precedes endocytosis. The protein is Nigrin b of Sambucus nigra (European elder).